The chain runs to 825 residues: Probable phosphoketolase (825 aa).

It belongs to the XFP family. Thiamine diphosphate is required as a cofactor.

The polypeptide is Probable phosphoketolase (Schizosaccharomyces pombe (strain 972 / ATCC 24843) (Fission yeast)).